Consider the following 149-residue polypeptide: Glutamyl-tRNA(Gln) amidotransferase subunit C, mitochondrial (149 aa).

Belongs to the GatC family. In terms of assembly, subunit of the heterotrimeric GatCAB amidotransferase (AdT) complex, composed of A, B and C subunits.

The protein resides in the mitochondrion. The catalysed reaction is L-glutamyl-tRNA(Gln) + L-glutamine + ATP + H2O = L-glutaminyl-tRNA(Gln) + L-glutamate + ADP + phosphate + H(+). Functionally, allows the formation of correctly charged Gln-tRNA(Gln) through the transamidation of misacylated Glu-tRNA(Gln) in the mitochondria. The reaction takes place in the presence of glutamine and ATP through an activated gamma-phospho-Glu-tRNA(Gln). The protein is Glutamyl-tRNA(Gln) amidotransferase subunit C, mitochondrial of Trichoplax adhaerens (Trichoplax reptans).